We begin with the raw amino-acid sequence, 248 residues long: Isoamyl acetate-hydrolyzing esterase 1 homolog (248 aa).

Serine 24 acts as the Nucleophile in catalysis. At lysine 63 the chain carries N6-succinyllysine. Aspartate 196 functions as the Proton donor in the catalytic mechanism. The active-site Proton acceptor is histidine 199.

The protein belongs to the 'GDSL' lipolytic enzyme family. IAH1 subfamily.

In terms of biological role, probable lipase. This Homo sapiens (Human) protein is Isoamyl acetate-hydrolyzing esterase 1 homolog (IAH1).